Reading from the N-terminus, the 109-residue chain is Con-Ins K2 (109 aa).

Positions 1–24 are cleaved as a signal peptide; the sequence is MTTSSYFLLVALGLLLYVCQSSFG. The propeptide occupies 25 to 29; that stretch reads NPHTR. 3 disulfides stabilise this stretch: C41–C90, C53–C103, and C89–C94. E44 is modified (4-carboxyglutamate). The propeptide at 57–83 is c peptide; the sequence is RKRRGFPSMLKARAKRNEAFLLQRDGR.

The protein belongs to the insulin family. Heterodimer of A and B chains; disulfide-linked. As to expression, expressed by the venom gland.

The protein localises to the secreted. This venom insulin, from a fish-hunting cone snail, facilitates prey capture by rapidly inducing hypoglycemic shock. It is one of the smallest known insulin found in nature and lacks the C-terminal segment of the B chain that, in human insulin, mediates engagement of the insulin receptor (INSR) and assembly of the hormone's hexameric storage form. Despite lacking this segment, it both binds and activates human insulin receptor (long isoform (HIR-B)) with a moderate potency (EC(50)=373.2 nM). In vivo, intraperitoneal injection of this peptide into zebrafish lowers blood glucose with a lower potency than human insulin. In addition, when applied to water, this peptide reduces overall locomotor activity of zebrafish larvae, observed as a significant decrease in the percentage of time spent swimming and movement frequency. When tested on a mouse model of diabetes, this insulin also lowers blood glucose with a 20-fold lower potency than human insulin. This Conus kinoshitai (Kinoshita's cone) protein is Con-Ins K2.